The chain runs to 363 residues: Galactokinase (363 aa).

Residue 16 to 19 coordinates substrate; the sequence is EHTD. ATP contacts are provided by residues S50 and 103 to 109; that span reads GSGLSSS. Residues S109 and E141 each contribute to the Mg(2+) site. D153 functions as the Proton acceptor in the catalytic mechanism. Substrate is bound at residue Y205.

It belongs to the GHMP kinase family. GalK subfamily.

The protein resides in the cytoplasm. It carries out the reaction alpha-D-galactose + ATP = alpha-D-galactose 1-phosphate + ADP + H(+). The protein operates within carbohydrate metabolism; galactose metabolism. Functionally, catalyzes the transfer of the gamma-phosphate of ATP to D-galactose to form alpha-D-galactose-1-phosphate (Gal-1-P). The polypeptide is Galactokinase (Mycobacterium bovis (strain ATCC BAA-935 / AF2122/97)).